Consider the following 765-residue polypeptide: 5-methyltetrahydropteroyltriglutamate--homocysteine methyltransferase (765 aa).

Residues 18-21 and lysine 114 each bind 5-methyltetrahydropteroyltri-L-glutamate; that span reads REWK. L-homocysteine is bound by residues 437–439 and glutamate 490; that span reads IGS. L-methionine-binding positions include 437-439 and glutamate 490; that span reads IGS. Tryptophan 567 is a 5-methyltetrahydropteroyltri-L-glutamate binding site. Residue aspartate 605 participates in L-homocysteine binding. Aspartate 605 lines the L-methionine pocket. Glutamate 611 is a 5-methyltetrahydropteroyltri-L-glutamate binding site. Residues histidine 647, cysteine 649, and glutamate 671 each contribute to the Zn(2+) site. The Proton donor role is filled by histidine 700. Cysteine 732 contributes to the Zn(2+) binding site.

Belongs to the vitamin-B12 independent methionine synthase family. Zn(2+) is required as a cofactor.

It carries out the reaction 5-methyltetrahydropteroyltri-L-glutamate + L-homocysteine = tetrahydropteroyltri-L-glutamate + L-methionine. The protein operates within amino-acid biosynthesis; L-methionine biosynthesis via de novo pathway; L-methionine from L-homocysteine (MetE route): step 1/1. Functionally, catalyzes the transfer of a methyl group from 5-methyltetrahydrofolate to homocysteine resulting in methionine formation. The sequence is that of 5-methyltetrahydropteroyltriglutamate--homocysteine methyltransferase from Listeria innocua serovar 6a (strain ATCC BAA-680 / CLIP 11262).